The chain runs to 550 residues: Chaperonin GroEL (550 aa).

Residues 30–33 (TLGP), Lys51, 87–91 (DGTTT), Gly415, and Asp496 each bind ATP.

This sequence belongs to the chaperonin (HSP60) family. Forms a cylinder of 14 subunits composed of two heptameric rings stacked back-to-back. Interacts with the co-chaperonin GroES.

The protein localises to the cytoplasm. The catalysed reaction is ATP + H2O + a folded polypeptide = ADP + phosphate + an unfolded polypeptide.. Its function is as follows. Together with its co-chaperonin GroES, plays an essential role in assisting protein folding. The GroEL-GroES system forms a nano-cage that allows encapsulation of the non-native substrate proteins and provides a physical environment optimized to promote and accelerate protein folding. The sequence is that of Chaperonin GroEL from Rickettsia typhi (strain ATCC VR-144 / Wilmington).